A 188-amino-acid chain; its full sequence is ATP-dependent protease subunit HslV (188 aa).

The active site involves Thr8. Na(+) contacts are provided by Ala165, Cys168, and Thr171.

Belongs to the peptidase T1B family. HslV subfamily. A double ring-shaped homohexamer of HslV is capped on each side by a ring-shaped HslU homohexamer. The assembly of the HslU/HslV complex is dependent on binding of ATP.

It is found in the cytoplasm. The catalysed reaction is ATP-dependent cleavage of peptide bonds with broad specificity.. Allosterically activated by HslU binding. Protease subunit of a proteasome-like degradation complex believed to be a general protein degrading machinery. The polypeptide is ATP-dependent protease subunit HslV (Neorickettsia sennetsu (strain ATCC VR-367 / Miyayama) (Ehrlichia sennetsu)).